The sequence spans 265 residues: Tryptophan synthase alpha chain (265 aa).

Residues glutamate 47 and aspartate 58 each act as proton acceptor in the active site.

It belongs to the TrpA family. As to quaternary structure, tetramer of two alpha and two beta chains.

It catalyses the reaction (1S,2R)-1-C-(indol-3-yl)glycerol 3-phosphate + L-serine = D-glyceraldehyde 3-phosphate + L-tryptophan + H2O. The protein operates within amino-acid biosynthesis; L-tryptophan biosynthesis; L-tryptophan from chorismate: step 5/5. The alpha subunit is responsible for the aldol cleavage of indoleglycerol phosphate to indole and glyceraldehyde 3-phosphate. This chain is Tryptophan synthase alpha chain, found in Methanoregula boonei (strain DSM 21154 / JCM 14090 / 6A8).